The chain runs to 312 residues: MKHLLSISDLSKDEIVGLLDEADRFKEVLEGREVKKLPTLRGRTIFTLFYENSTRTRSSFETAGKWMSADVINISASSSSVKKGESLKDTGLTLSAIGADAIIMRHPASGAAQQLAQFVAPGGNGPSVINAGDGSHQHPTQALLDALTIRQRTGRIEGLKVVIVGDCLHSRVVRSNVDLLSTLGAEVVLVAPPTLLPIGVENWPVRFSYDMDAEIADADVVMMLRVQQERMQGGFFPSHREYATLYGMSKEREARLKDSAIIMHPGPMLRGMEINFQVADAPRTAVLQQVSNGVHMRMAILFALVAGSDATI.

Arg55 and Thr56 together coordinate carbamoyl phosphate. Lys83 lines the L-aspartate pocket. Positions 105, 138, and 141 each coordinate carbamoyl phosphate. Arg171 and Arg225 together coordinate L-aspartate. The carbamoyl phosphate site is built by Gly266 and Pro267.

Belongs to the aspartate/ornithine carbamoyltransferase superfamily. ATCase family. Heterododecamer (2C3:3R2) of six catalytic PyrB chains organized as two trimers (C3), and six regulatory PyrI chains organized as three dimers (R2).

It catalyses the reaction carbamoyl phosphate + L-aspartate = N-carbamoyl-L-aspartate + phosphate + H(+). Its pathway is pyrimidine metabolism; UMP biosynthesis via de novo pathway; (S)-dihydroorotate from bicarbonate: step 2/3. Catalyzes the condensation of carbamoyl phosphate and aspartate to form carbamoyl aspartate and inorganic phosphate, the committed step in the de novo pyrimidine nucleotide biosynthesis pathway. The protein is Aspartate carbamoyltransferase catalytic subunit of Corynebacterium glutamicum (strain ATCC 13032 / DSM 20300 / JCM 1318 / BCRC 11384 / CCUG 27702 / LMG 3730 / NBRC 12168 / NCIMB 10025 / NRRL B-2784 / 534).